The chain runs to 287 residues: Putative S-adenosyl-L-methionine-dependent methyltransferase SACE_1742 (287 aa).

S-adenosyl-L-methionine contacts are provided by residues Asp119 and 148–149 (DL).

Belongs to the UPF0677 family.

In terms of biological role, exhibits S-adenosyl-L-methionine-dependent methyltransferase activity. The protein is Putative S-adenosyl-L-methionine-dependent methyltransferase SACE_1742 of Saccharopolyspora erythraea (strain ATCC 11635 / DSM 40517 / JCM 4748 / NBRC 13426 / NCIMB 8594 / NRRL 2338).